The sequence spans 189 residues: Large ribosomal subunit protein bL12c (189 aa).

2 disordered regions span residues 1–30 and 165–189; these read MAAT…HPQP and EGVS…VSIV. The N-terminal 56 residues, 1 to 56, are a transit peptide targeting the chloroplast; it reads MAATTTMATLNLPSLTSHPNSSTFPKHPQPLQFPFRTTTNPISLSSTRTTRLRPIA. A compositionally biased stretch (polar residues) spans 11-24; that stretch reads NLPSLTSHPNSSTF. Basic and acidic residues predominate over residues 165–183; that stretch reads EGVSKDDAEDAKKQLEDAG.

Component of the chloroplast large ribosomal subunit (LSU). Mature 70S chloroplast ribosomes of higher plants consist of a small (30S) and a large (50S) subunit. The 30S small subunit contains 1 molecule of ribosomal RNA (16S rRNA) and 24 different proteins. The 50S large subunit contains 3 rRNA molecules (23S, 5S and 4.5S rRNA) and 33 different proteins.

It localises to the plastid. Its subcellular location is the chloroplast. Component of the chloroplast ribosome (chloro-ribosome), a dedicated translation machinery responsible for the synthesis of chloroplast genome-encoded proteins, including proteins of the transcription and translation machinery and components of the photosynthetic apparatus. This Spinacia oleracea (Spinach) protein is Large ribosomal subunit protein bL12c (RPL12).